The sequence spans 109 residues: Thiosulfate sulfurtransferase GlpE (109 aa).

One can recognise a Rhodanese domain in the interval 16 to 104; that stretch reads REQGAVVVDI…WRSTYPAETA (89 aa). The active-site Cysteine persulfide intermediate is Cys-64.

It belongs to the GlpE family.

It is found in the cytoplasm. The catalysed reaction is thiosulfate + hydrogen cyanide = thiocyanate + sulfite + 2 H(+). The enzyme catalyses thiosulfate + [thioredoxin]-dithiol = [thioredoxin]-disulfide + hydrogen sulfide + sulfite + 2 H(+). Transferase that catalyzes the transfer of sulfur from thiosulfate to thiophilic acceptors such as cyanide or dithiols. May function in a CysM-independent thiosulfate assimilation pathway by catalyzing the conversion of thiosulfate to sulfite, which can then be used for L-cysteine biosynthesis. The sequence is that of Thiosulfate sulfurtransferase GlpE from Pseudomonas fluorescens (strain ATCC BAA-477 / NRRL B-23932 / Pf-5).